We begin with the raw amino-acid sequence, 918 residues long: Aconitase-ribosomal protein bL21m fusion protein (918 aa).

A mitochondrion-targeting transit peptide spans 1 to 30 (MATFARMKLCLSGSSQAIPSKGISLVAARF). Residues 31-811 (QSTASRASYV…IDSIKQQPDH (781 aa)) are homocitrate dehydratase, mitochondrial. Substrate is bound by residues glutamine 105 and 198 to 200 (DSH). Residues cysteine 394, cysteine 457, and cysteine 460 each contribute to the [4Fe-4S] cluster site. Substrate is bound by residues arginine 484, arginine 489, lysine 619, and 680 to 681 (AR). The large ribosomal subunit protein bL21m stretch occupies residues 812 to 918 (YADAYIFNRH…ILRVTELKLN (107 aa)).

The protein in the N-terminal section; belongs to the aconitase/IPM isomerase family. This sequence in the C-terminal section; belongs to the bacterial ribosomal protein bL21 family. Component of the mitochondrial large ribosomal subunit (mt-LSU). Mature yeast 74S mitochondrial ribosomes consist of a small (37S) and a large (54S) subunit. The 37S small subunit contains a 15S ribosomal RNA (15S mt-rRNA) and at least 32 different proteins. The 54S large subunit contains a 21S rRNA (21S mt-rRNA) and at least 45 different proteins. The cofactor is [4Fe-4S] cluster.

The protein resides in the mitochondrion. It is found in the nucleus. It catalyses the reaction (2R)-homocitrate = cis-homoaconitate + H2O. It functions in the pathway amino-acid biosynthesis; L-lysine biosynthesis via AAA pathway; L-alpha-aminoadipate from 2-oxoglutarate: step 2/5. Functionally, catalyzes the reversible dehydration of (R)-homocitrate to cis-homoaconitate, a step in the alpha-aminoadipate pathway for lysine biosynthesis. Its function is as follows. Component of the mitochondrial ribosome (mitoribosome), a dedicated translation machinery responsible for the synthesis of mitochondrial genome-encoded proteins, including at least some of the essential transmembrane subunits of the mitochondrial respiratory chain. The mitoribosomes are attached to the mitochondrial inner membrane and translation products are cotranslationally integrated into the membrane. The sequence is that of Aconitase-ribosomal protein bL21m fusion protein (aco2) from Schizosaccharomyces pombe (strain 972 / ATCC 24843) (Fission yeast).